The following is a 198-amino-acid chain: Ribonuclease HII (198 aa).

The RNase H type-2 domain occupies 11–198 (TCIAGVDEVG…APVKRALGLA (188 aa)). Residues Asp17, Glu18, and Asp109 each contribute to the a divalent metal cation site.

This sequence belongs to the RNase HII family. Requires Mn(2+) as cofactor. Mg(2+) serves as cofactor.

Its subcellular location is the cytoplasm. It catalyses the reaction Endonucleolytic cleavage to 5'-phosphomonoester.. Functionally, endonuclease that specifically degrades the RNA of RNA-DNA hybrids. In Pectobacterium carotovorum subsp. carotovorum (strain PC1), this protein is Ribonuclease HII.